The primary structure comprises 442 residues: Syndecan-3 (442 aa).

Disordered regions lie at residues 1-24 and 57-87; these read MKPG…AAAG and RPVD…SGYF. The Extracellular portion of the chain corresponds to 1–387; the sequence is MKPGPPHRAG…SILERKEVLV (387 aa). The segment covering 13 to 24 has biased composition (gly residues); the sequence is HGAGAGAGAAAG. Residues 63–77 show a composition bias toward acidic residues; the sequence is GSGDDDSFPDDELDD. Residues Ser-80, Ser-82, Ser-84, and Ser-91 are each glycosylated (O-linked (Xyl...) (glycosaminoglycan) serine). A glycan (O-linked (GalNAc) serine; by GALNT13) is linked at Ser-108. 2 O-linked (GalNAc) threonine; by GALNT13 glycosylation sites follow: Thr-109 and Thr-110. Disordered regions lie at residues 150–173, 225–326, and 340–367; these read EEPS…STGD, TTPE…ETTQ, and AAKA…AIDS. Composition is skewed to low complexity over residues 156–173, 225–238, and 275–286; these read ATTV…STGD, TTPE…TAAV, and TLPLGTTAPGPT. A glycan (O-linked (GalNAc) serine; by GALNT13) is linked at Ser-160. 3 O-linked (GalNAc) threonine; by GALNT13 glycosylation sites follow: Thr-161, Thr-162, and Thr-169. A glycan (O-linked (GalNAc) serine; by GALNT13) is linked at Ser-170. An O-linked (GalNAc) threonine; by GALNT13 glycan is attached at Thr-171. A compositionally biased stretch (polar residues) spans 288–299; that stretch reads VAQTPTPETFLT. Ser-314 and Ser-367 each carry an O-linked (Xyl...) (glycosaminoglycan) serine glycan. Residues 388-408 traverse the membrane as a helical segment; that stretch reads AVIVGGVVGALFAAFLVTLLI. Phosphotyrosine is present on residues Tyr-409, Tyr-419, Tyr-431, and Tyr-441. The Cytoplasmic portion of the chain corresponds to 409–442; the sequence is YRMKKKDEGSYTLEEPKQASVTYQKPDKQEEFYA. Positions 419–442 are disordered; the sequence is YTLEEPKQASVTYQKPDKQEEFYA. The span at 433-442 shows a compositional bias: basic and acidic residues; the sequence is KPDKQEEFYA.

The protein belongs to the syndecan proteoglycan family. As to quaternary structure, interacts with TIAM1. Interacts with PTN (via heparan sulfate chains); this interaction mediates the neurite outgrowth-promoting signal from PTN to the cytoskeleton of growing neurites; this interaction mediates osteoblast recruitment. Interacts with MDK; this interaction induces SDC3 clustering; this interaction induces neuronal cell adhesion and neurite outgrowth. In terms of processing, O-glycosylated within the Thr/Ser-rich region which could interact with lectin domains on other molecules. As to expression, expressed in the nervous system, the adrenal gland, and the spleen.

Its subcellular location is the cell membrane. Its function is as follows. Cell surface proteoglycan that may bear heparan sulfate. May have a role in the organization of cell shape by affecting the actin cytoskeleton, possibly by transferring signals from the cell surface in a sugar-dependent mechanism. The polypeptide is Syndecan-3 (SDC3) (Homo sapiens (Human)).